The chain runs to 114 residues: ATP synthase epsilon chain (114 aa).

Belongs to the ATPase epsilon chain family. In terms of assembly, F-type ATPases have 2 components, CF(1) - the catalytic core - and CF(0) - the membrane proton channel. CF(1) has five subunits: alpha(3), beta(3), gamma(1), delta(1), epsilon(1). CF(0) has three main subunits: a, b and c.

Its subcellular location is the cell membrane. In terms of biological role, produces ATP from ADP in the presence of a proton gradient across the membrane. This chain is ATP synthase epsilon chain, found in Wolbachia pipientis wMel.